Consider the following 147-residue polypeptide: Hemoglobin subunit beta (147 aa).

Position 2 is an N-acetylvaline (Val-2). The Globin domain occupies 3-147 (HLTGDEKAAV…VANALAHKYH (145 aa)). Thr-13 carries the post-translational modification Phosphothreonine. The residue at position 45 (Ser-45) is a Phosphoserine. Lys-60 bears the N6-acetyllysine mark. Residue His-64 coordinates heme b. The residue at position 83 (Lys-83) is an N6-acetyllysine. His-93 is a heme b binding site. Cys-94 bears the S-nitrosocysteine mark. N6-acetyllysine is present on Lys-145.

This sequence belongs to the globin family. Heterotetramer of two alpha chains and two beta chains. In terms of tissue distribution, red blood cells.

Functionally, involved in oxygen transport from the lung to the various peripheral tissues. This chain is Hemoglobin subunit beta (HBB), found in Alouatta belzebul (Red-handed howler monkey).